The following is a 151-amino-acid chain: Acidic phospholipase A2 3 (151 aa).

The first 27 residues, 1-27 (MYPAHLLVLLAVCVSLLGAASIPARPL), serve as a signal peptide directing secretion. Disulfide bonds link C38–C104, C54–C151, C56–C72, C71–C132, C78–C125, C88–C118, and C111–C123. Ca(2+) contacts are provided by Y55, G57, and G59. H75 is a catalytic residue. D76 contacts Ca(2+). The active site involves D126.

Belongs to the phospholipase A2 family. Group I subfamily. D49 sub-subfamily. Ca(2+) serves as cofactor. As to expression, expressed by the venom gland.

It is found in the secreted. The catalysed reaction is a 1,2-diacyl-sn-glycero-3-phosphocholine + H2O = a 1-acyl-sn-glycero-3-phosphocholine + a fatty acid + H(+). Its function is as follows. PLA2 catalyzes the calcium-dependent hydrolysis of the 2-acyl groups in 3-sn-phosphoglycerides. This is Acidic phospholipase A2 3 from Tropidechis carinatus (Australian rough-scaled snake).